The following is a 59-amino-acid chain: Large ribosomal subunit protein uL30 (59 aa).

The protein belongs to the universal ribosomal protein uL30 family. In terms of assembly, part of the 50S ribosomal subunit.

The polypeptide is Large ribosomal subunit protein uL30 (Photobacterium profundum (strain SS9)).